The following is a 321-amino-acid chain: Beta-ketoacyl-[acyl-carrier-protein] synthase III (321 aa).

Catalysis depends on residues cysteine 114 and histidine 248. The ACP-binding stretch occupies residues glutamine 249–arginine 253. Asparagine 278 is a catalytic residue.

It belongs to the thiolase-like superfamily. FabH family. Homodimer.

The protein localises to the cytoplasm. The catalysed reaction is malonyl-[ACP] + acetyl-CoA + H(+) = 3-oxobutanoyl-[ACP] + CO2 + CoA. It participates in lipid metabolism; fatty acid biosynthesis. Catalyzes the condensation reaction of fatty acid synthesis by the addition to an acyl acceptor of two carbons from malonyl-ACP. Catalyzes the first condensation reaction which initiates fatty acid synthesis and may therefore play a role in governing the total rate of fatty acid production. Possesses both acetoacetyl-ACP synthase and acetyl transacylase activities. Its substrate specificity determines the biosynthesis of branched-chain and/or straight-chain of fatty acids. In Sphingopyxis alaskensis (strain DSM 13593 / LMG 18877 / RB2256) (Sphingomonas alaskensis), this protein is Beta-ketoacyl-[acyl-carrier-protein] synthase III.